The sequence spans 164 residues: AINRQINLELYASYVYLSMSYYFDRDDVALKNFAKYFLHQSHEEREHAEKLMKLQNQRGGRIFLQDIKKPEYDDWESGLNAMECALHLEKSVNQSLLELHKLATDKNDPHLCDFIETHYLNEQVKSIKELGDHVTNLRKMGAPESGMAEYLFDKHTLGHSDNES.

One can recognise a Ferritin-like diiron domain in the interval Ala-1–Gly-141. Fe cation contacts are provided by Glu-9, Glu-44, His-47, Glu-89, and Gln-123. Ser-160 and Ser-164 each carry phosphoserine.

Belongs to the ferritin family. As to quaternary structure, oligomer of 24 subunits. There are two types of subunits: L (light) chain and H (heavy) chain. The major chain can be light or heavy, depending on the species and tissue type. The functional molecule forms a roughly spherical shell with a diameter of 12 nm and contains a central cavity into which the insoluble mineral iron core is deposited. Interacts with NCOA4; NCOA4 promotes targeting of the iron-binding ferritin complex to autolysosomes following starvation or iron depletion.

The protein resides in the cytoplasm. It is found in the lysosome. Its subcellular location is the cytoplasmic vesicle. The protein localises to the autophagosome. The enzyme catalyses 4 Fe(2+) + O2 + 4 H(+) = 4 Fe(3+) + 2 H2O. Its function is as follows. Stores iron in a soluble, non-toxic, readily available form. Important for iron homeostasis. Has ferroxidase activity. Iron is taken up in the ferrous form and deposited as ferric hydroxides after oxidation. Also plays a role in delivery of iron to cells. Mediates iron uptake in capsule cells of the developing kidney. Delivery to lysosomes is mediated by the cargo receptor NCOA4 for autophagic degradation and release of iron. This is Ferritin heavy chain (FTH1) from Oryctolagus cuniculus (Rabbit).